The following is a 434-amino-acid chain: Serine hydroxymethyltransferase (434 aa).

(6S)-5,6,7,8-tetrahydrofolate-binding positions include Leu-128 and 132–134 (GHL). The residue at position 237 (Lys-237) is an N6-(pyridoxal phosphate)lysine.

The protein belongs to the SHMT family. As to quaternary structure, homodimer. It depends on pyridoxal 5'-phosphate as a cofactor.

Its subcellular location is the cytoplasm. It catalyses the reaction (6R)-5,10-methylene-5,6,7,8-tetrahydrofolate + glycine + H2O = (6S)-5,6,7,8-tetrahydrofolate + L-serine. It participates in one-carbon metabolism; tetrahydrofolate interconversion. It functions in the pathway amino-acid biosynthesis; glycine biosynthesis; glycine from L-serine: step 1/1. Functionally, catalyzes the reversible interconversion of serine and glycine with tetrahydrofolate (THF) serving as the one-carbon carrier. This reaction serves as the major source of one-carbon groups required for the biosynthesis of purines, thymidylate, methionine, and other important biomolecules. Also exhibits THF-independent aldolase activity toward beta-hydroxyamino acids, producing glycine and aldehydes, via a retro-aldol mechanism. The polypeptide is Serine hydroxymethyltransferase (Corynebacterium efficiens (strain DSM 44549 / YS-314 / AJ 12310 / JCM 11189 / NBRC 100395)).